Reading from the N-terminus, the 81-residue chain is Omega-conotoxin-like TxO4 (81 aa).

An N-terminal signal peptide occupies residues 1–22 (MKLTCVVIVAVLFLTAWTFVTA). Positions 23 to 52 (VPHSSNALENLYLKARHEMENPEASKLNTR) are excised as a propeptide. Cystine bridges form between Cys55-Cys72, Cys62-Cys76, and Cys71-Cys80. Position 70 is a 4-hydroxyproline; partial (Pro70). A 6'-bromotryptophan; partial modification is found at Trp75.

The protein belongs to the conotoxin O1 superfamily. TxO4 is found with and without hydroxyproline and these two forms have a bromotryptophan. Truncated TxO4 is found with and without bromotryptophan, and these two forms have no hydroxyproline. Expressed by the venom duct.

The protein localises to the secreted. Functionally, omega-conotoxins act at presynaptic membranes, they bind and block voltage-gated calcium channels (Cav). The protein is Omega-conotoxin-like TxO4 of Conus textile (Cloth-of-gold cone).